A 197-amino-acid polypeptide reads, in one-letter code: MEITKKPKIKSIPYDEFIDNESLEKLVKELNTGGANVFLGVLDDLVNWGRSNSLWPLTFATSCCGIEFMALGAARYDMARFGFEVARASPRQADMIMVCGTITNKMAPVLKRLYDQMPDPKYVVAVGGCAVSGGPFKKSYHVLNGVDKILPVDVYIPGCPPRPEAFYYGMMQLQRKVKIEKFFGGTNRKEKKPEFMK.

[4Fe-4S] cluster-binding residues include Cys-63, Cys-64, Cys-129, and Cys-159.

This sequence belongs to the complex I 20 kDa subunit family. In terms of assembly, NDH-1 is composed of 14 different subunits. Subunits NuoB, C, D, E, F, and G constitute the peripheral sector of the complex. The cofactor is [4Fe-4S] cluster.

It is found in the cell inner membrane. The enzyme catalyses a quinone + NADH + 5 H(+)(in) = a quinol + NAD(+) + 4 H(+)(out). In terms of biological role, NDH-1 shuttles electrons from NADH, via FMN and iron-sulfur (Fe-S) centers, to quinones in the respiratory chain. The immediate electron acceptor for the enzyme in this species is believed to be a menaquinone. Couples the redox reaction to proton translocation (for every two electrons transferred, four hydrogen ions are translocated across the cytoplasmic membrane), and thus conserves the redox energy in a proton gradient. The sequence is that of NADH-quinone oxidoreductase subunit B from Bacteroides thetaiotaomicron (strain ATCC 29148 / DSM 2079 / JCM 5827 / CCUG 10774 / NCTC 10582 / VPI-5482 / E50).